Consider the following 103-residue polypeptide: Cell division protein FtsB (103 aa).

Residues 1 to 3 (MGK) lie on the Cytoplasmic side of the membrane. The helical transmembrane segment at 4–21 (LTLLLLAILVWLQYSLWF) threads the bilayer. At 22–103 (GKNGIHDYTR…RAQSAGQNNR (82 aa)) the chain is on the periplasmic side. The stretch at 31–71 (RVNDDVAAQQATNAKLKARNDQLFAEIDDLNGGQEALEERA) forms a coiled coil.

It belongs to the FtsB family. Part of a complex composed of FtsB, FtsL and FtsQ.

It localises to the cell inner membrane. Functionally, essential cell division protein. May link together the upstream cell division proteins, which are predominantly cytoplasmic, with the downstream cell division proteins, which are predominantly periplasmic. This chain is Cell division protein FtsB, found in Shigella boydii serotype 18 (strain CDC 3083-94 / BS512).